A 159-amino-acid polypeptide reads, in one-letter code: Peripheral myelin protein 22 (159 aa).

Residue Met1 is a topological domain, cytoplasmic. The helical transmembrane segment at 2–31 threads the bilayer; that stretch reads LLLLLGIIVLHVAVLVLLFVATIVSQWIVG. The Extracellular portion of the chain corresponds to 32–64; the sequence is NGHATDLWQNCSTTSGNVQHCLSSSANEWLQSV. Asn41 carries N-linked (GlcNAc...) asparagine glycosylation. The helical transmembrane segment at 65–91 threads the bilayer; that stretch reads QATMILSIIFSVLSLFLFFCQLFTLTK. The Cytoplasmic segment spans residues 92 to 95; it reads GGRF. The chain crosses the membrane as a helical span at residues 96-119; sequence YITGIFQILAGLCVMSAASIYTVR. Over 120-133 the chain is Extracellular; that stretch reads HPEWHLDSAYSYGF. The chain crosses the membrane as a helical span at residues 134 to 156; the sequence is AYILAWVAFPLALLSGVVYVILR. At 157 to 159 the chain is on the cytoplasmic side; the sequence is KRE.

It belongs to the PMP-22/EMP/MP20 family. Ubiquitinated by the DCX(DCAF13) E3 ubiquitin ligase complex, leading to its degradation.

The protein localises to the cell membrane. Its function is as follows. Might be involved in growth regulation, and in myelinization in the peripheral nervous system. The protein is Peripheral myelin protein 22 (PMP22) of Equus caballus (Horse).